Consider the following 336-residue polypeptide: Potassium channel subfamily K member 1 (336 aa).

Topologically, residues 1–20 (MLQSLAGSSCVRLVERHRSA) are cytoplasmic. Residues 21-41 (WCFGFLVLGYLLYLVFGAVVF) form a helical membrane-spanning segment. Residues 42–103 (SSVELPYEDL…SNASGNWNWD (62 aa)) are Extracellular-facing. An N-linked (GlcNAc...) asparagine glycan is attached at asparagine 95. The segment at residues 104 to 116 (FASALFFASTVLS) is an intramembrane region (helical). Residues 117-122 (TTGYGH) lie within the membrane without spanning it. Residues 117 to 122 (TTGYGH) are selectivity filter 1. Over 123–132 (TVPLSDGGKA) the chain is Extracellular. The chain crosses the membrane as a helical span at residues 133–156 (FCIIYSVIGIPFTLLFLTAVVQRV). Over 157-181 (TVHVTRRPVLYFHVRWGFSKQVVAI) the chain is Cytoplasmic. A helical transmembrane segment spans residues 182–202 (VHAVLLGLITVSCFFFIPAAV). Residues 203–211 (FSVLEDDWN) lie on the Extracellular side of the membrane. Residues 212–224 (FLESFYFCFISLS) constitute an intramembrane region (helical). Residues 225–230 (TIGLGD) form a selectivity filter 2 region. Residues 225 to 231 (TIGLGDY) lie within the membrane without spanning it. Residues 232–243 (VPGEGYNQKFRE) are Extracellular-facing. Residues 244–267 (LYKIGITCYLLLGLIAMLVVLETF) form a helical membrane-spanning segment. Residues 268–336 (CELHELKKFR…SACADGPANH (69 aa)) lie on the Cytoplasmic side of the membrane. Lysine 274 participates in a covalent cross-link: Glycyl lysine isopeptide (Lys-Gly) (interchain with G-Cter in SUMO). The tract at residues 293–299 (IIEHDQL) is important for intracellular retention in recycling endosomes. A disordered region spans residues 315 to 336 (QKQNEPFVATPSSACADGPANH). A Phosphoserine modification is found at serine 326.

It belongs to the two pore domain potassium channel (TC 1.A.1.8) family. In terms of assembly, homodimer; disulfide-linked. Heterodimer with KCNK2; disulfide-linked. In astrocytes, forms mostly heterodimeric potassium channels with KCNK2, with only a minor proportion of functional channels containing homodimeric KCNK1. Interacts with KCNK3 and KCNK9, forming functional heterodimeric channels. Interacts with GNG4. Identified in a complex with PSD and ARF6; interacts only with PSD that is bound to ARF6. Interacts with UBE2I. Post-translationally, sumoylation is controversial. Sumoylated by UBE2I. Not sumoylated when expressed in xenopus oocytes or mammalian cells. Sumoylation inactivates the channel, but does not interfere with expression at the cell membrane. Sumoylation of a single subunit is sufficient to silence the dimeric channel. Sumoylation of KCNK1 is sufficient to silence heterodimeric channels formed by KCNK1 and KCNK3 or KCNK9. Desumoylated by SENP1; this activates the channel. Desumoylated by SENP1; this strongly increases halothane-mediated activation of heterodimeric channels formed with KCNK9. SENP1 treatment has no effect. As to expression, expressed in renal distal tubules, especially in cortical collecting duct and cortical thick ascending limb, with lower levels in the connecting tubule.

It is found in the cell membrane. Its subcellular location is the recycling endosome. The protein resides in the synaptic cell membrane. It localises to the cytoplasmic vesicle. The protein localises to the perikaryon. It is found in the cell projection. Its subcellular location is the dendrite. The protein resides in the apical cell membrane. It catalyses the reaction K(+)(in) = K(+)(out). The enzyme catalyses NH4(+)(in) = NH4(+)(out). It carries out the reaction Na(+)(in) = Na(+)(out). The catalysed reaction is Rb(+)(in) = Rb(+)(out). It catalyses the reaction Cs(+)(in) = Cs(+)(out). The enzyme catalyses Li(+)(in) = Li(+)(out). It carries out the reaction L-glutamate(out) = L-glutamate(in). The catalysed reaction is chloride(in) = chloride(out). Ion channel that contributes to passive transmembrane potassium transport and to the regulation of the resting membrane potential in brain astrocytes, but also in kidney and in other tissues. Forms dimeric channels through which potassium ions pass in accordance with their electrochemical gradient. The channel is selective for K(+) ions at physiological potassium concentrations and at neutral pH, but becomes permeable to Na(+) at subphysiological K(+) levels and upon acidification of the extracellular medium. The homodimer has very low potassium channel activity, when expressed in heterologous systems, and can function as weakly inward rectifying potassium channel. Channel activity is modulated by activation of serotonin receptors. Heterodimeric channels containing KCNK1 and KCNK2 have much higher activity, and may represent the predominant form in astrocytes. Heterodimeric channels containing KCNK1 and KCNK3 or KCNK9 have much higher activity. Heterodimeric channels formed by KCNK1 and KCNK9 may contribute to halothane-sensitive currents. Mediates outward rectifying potassium currents in dentate gyrus granule cells and contributes to the regulation of their resting membrane potential. Contributes to the regulation of action potential firing in dentate gyrus granule cells and down-regulates their intrinsic excitability. In astrocytes, the heterodimer formed by KCNK1 and KCNK2 is required for rapid glutamate release in response to activation of G-protein coupled receptors, such as F2R and CNR1. Required for normal ion and water transport in the kidney. Contributes to the regulation of the resting membrane potential of pancreatic beta cells. The low channel activity of homodimeric KCNK1 may be due to sumoylation. The low channel activity may be due to rapid internalization from the cell membrane and retention in recycling endosomes. Permeable to monovalent cations with ion selectivity for K(+) &gt; Rb(+) &gt;&gt; NH4(+) &gt;&gt; Cs(+) = Na(+) = Li(+). This chain is Potassium channel subfamily K member 1, found in Oryctolagus cuniculus (Rabbit).